A 1010-amino-acid chain; its full sequence is Peroxisome proliferator-activated receptor gamma coactivator 1-beta (1010 aa).

Residues 1–91 form an abolishes DNA transcriptional activity when missing region; it reads MAGNDCGALL…FFQIDSENEA (91 aa). The interval 115-134 is disordered; that stretch reads GLDEGDTPSCTPASPAPLSV. The LXXLL motif 1 signature appears at 140-144; sequence LERLL. Phosphoserine occurs at positions 145 and 148. The LXXLL motif 2 motif lies at 156–160; the sequence is LQKLL. Disordered regions lie at residues 165 to 214, 227 to 282, and 306 to 329; these read SPTA…RPCT, PRGK…QVPK, and PQRASEPIPQSCSSPLRKVPPRSR. Polar residues-rich tracts occupy residues 178–189 and 264–279; these read TWSQTSLSSRSQ and PQDSLGQDTANPNSAQ. The LXXLL motif 3 signature appears at 342-346; the sequence is LRELL. Positions 369–384 are enriched in polar residues; it reads TPQSRTRPPKDSQASP. Disordered regions lie at residues 369–475, 517–567, and 590–674; these read TPQS…VCPV, GLTD…CLML, and GTAG…QKRP. Phosphoserine is present on Ser383. Residues 411–428 show a composition bias toward basic and acidic residues; the sequence is LRLEVKRDVNKPARQKRE. Residues 429–449 are compositionally biased toward acidic residues; it reads EDEEEEEEEEEEEEKEDEEEE. Residues 521 to 532 show a composition bias toward low complexity; sequence SSQGQQLPLGSQ. Residues 604–618 show a composition bias toward basic and acidic residues; that stretch reads PMEEDPFKQDTKHSP. 2 stretches are compositionally biased toward polar residues: residues 619–638 and 659–670; these read GQDTAPSLPSPETLQLTATP and QHATTQPVSQAG. Residue Ser628 is modified to Phosphoserine. The HCFC1-binding-motif (HBM) motif lies at 681 to 684; the sequence is DHDY. 2 disordered regions span residues 714-744 and 778-881; these read HQGATLPVETKTPRREADQNCDPTPKDSMQL and DTVF…KKRR. Positions 782 to 794 are enriched in low complexity; the sequence is EDSSSSSGESSFL. Residues 795 to 811 show a composition bias toward acidic residues; the sequence is LEEEEEEGGEEDDEGED. The segment covering 832–852 has biased composition (low complexity); it reads SRQLCSRSRSSSGSSSCSSWS. Positions 889 to 963 constitute an RRM domain; the sequence is RVVYIRNLSG…RNEPSFHLSY (75 aa).

In terms of assembly, interacts with estrogen receptor alpha/ESR1. Interacts with Sterol regulatory binding transcription factor 1/SREBF1, PPAR-alpha/PPARA, thyroid hormone receptor beta/THRB and host cell factor/HCFC1. Interacts with Estrogen-related receptor gamma/ESRRG and alpha/ESRRA. Interacts with PRDM16. Ubiquitous with higher expression in heart, brown adipose tissue.

It is found in the nucleus. Plays a role of stimulator of transcription factors and nuclear receptors activities. Activates transcriptional activity of estrogen receptor alpha, nuclear respiratory factor 1 (NRF1) and glucocorticoid receptor in the presence of glucocorticoids. May play a role in constitutive non-adrenergic-mediated mitochondrial biogenesis as suggested by increased basal oxygen consumption and mitochondrial number when overexpressed. May be part of the pathways regulating the elevation of gluconeogenesis, beta-oxidation of fatty acids and ketogenesis during fasting. Stimulates SREBP-mediated lipogenic gene expression in the liver. Induces energy expenditure and antagonizes obesity when overexpressed. Also induces the expression of mitochondrial genes involved in oxidative metabolism. Induces the expression of PERM1 in the skeletal muscle in an ESRRA-dependent manner. This Rattus norvegicus (Rat) protein is Peroxisome proliferator-activated receptor gamma coactivator 1-beta (Ppargc1b).